The primary structure comprises 568 residues: Proline--tRNA ligase (568 aa).

Belongs to the class-II aminoacyl-tRNA synthetase family. ProS type 1 subfamily. In terms of assembly, homodimer.

The protein resides in the cytoplasm. The enzyme catalyses tRNA(Pro) + L-proline + ATP = L-prolyl-tRNA(Pro) + AMP + diphosphate. Its function is as follows. Catalyzes the attachment of proline to tRNA(Pro) in a two-step reaction: proline is first activated by ATP to form Pro-AMP and then transferred to the acceptor end of tRNA(Pro). As ProRS can inadvertently accommodate and process non-cognate amino acids such as alanine and cysteine, to avoid such errors it has two additional distinct editing activities against alanine. One activity is designated as 'pretransfer' editing and involves the tRNA(Pro)-independent hydrolysis of activated Ala-AMP. The other activity is designated 'posttransfer' editing and involves deacylation of mischarged Ala-tRNA(Pro). The misacylated Cys-tRNA(Pro) is not edited by ProRS. The sequence is that of Proline--tRNA ligase from Alkalilimnicola ehrlichii (strain ATCC BAA-1101 / DSM 17681 / MLHE-1).